Reading from the N-terminus, the 476-residue chain is Transmembrane transporter FPSE_08127 (476 aa).

A helical membrane pass occupies residues 72 to 92; that stretch reads ILAIPAALGALGSIGGSLCII. N111 is a glycosylation site (N-linked (GlcNAc...) asparagine). A run of 9 helical transmembrane segments spans residues 133–153, 164–184, 192–212, 231–251, 275–295, 317–337, 364–384, 387–407, and 431–451; these read LVGVQIIIAQTLVTAGGVVAI, GTCTVAFGLISAIAVTAFSAI, WLTWIGFITFVIGVFIFVVAV, WAPIAYPSFVVGMVSVTNIFI, ACLVAGFIVGAMYLSFSLVIY, VAYGVSLPGLILGVGIYQHVA, LGINIALGTAAFIVAEAVPIL, LLGLAGAICLAPFSLIFPALL, and LIMMFGFFMMIAGFYSVVVLI.

It belongs to the amino acid/polyamine transporter 2 family.

The protein localises to the membrane. Transmembrane transporter; part of the Fusarium detoxification of benzoxazolinone cluster involved in the degradation of benzoxazolinones produced by the host plant. Maize, wheat, and rye produce the 2 benzoxazinone phytoanticipins 2,4-dihy-droxy-7-methoxy-1,4-benzoxazin-3-one (DIMBOA) and 2,4-dihydroxy-1,4-benzoxazin-3-one (DIBOA) that, due to their inherent instability once released, spontaneously degrade to the more stable corresponding benzoxazolinones, 6-methoxy-2-benzoxazolinone (MBOA) and 2-benzoxazolinone (BOA), respectively. FPSE_08127 is proposed to shuttle metabolites of benzoxazolinone degradation. The polypeptide is Transmembrane transporter FPSE_08127 (Fusarium pseudograminearum (strain CS3096) (Wheat and barley crown-rot fungus)).